The following is a 169-amino-acid chain: Ureidoglycolate lyase (169 aa).

The protein belongs to the ureidoglycolate lyase family. Homodimer. The cofactor is Ni(2+).

The catalysed reaction is (S)-ureidoglycolate = urea + glyoxylate. It functions in the pathway nitrogen metabolism; (S)-allantoin degradation. In terms of biological role, catalyzes the catabolism of the allantoin degradation intermediate (S)-ureidoglycolate, generating urea and glyoxylate. Involved in the utilization of allantoin as nitrogen source. This chain is Ureidoglycolate lyase, found in Brucella ovis (strain ATCC 25840 / 63/290 / NCTC 10512).